Reading from the N-terminus, the 168-residue chain is Endoribonuclease YbeY (168 aa).

Zn(2+)-binding residues include His-123, His-127, and His-133.

Belongs to the endoribonuclease YbeY family. It depends on Zn(2+) as a cofactor.

It localises to the cytoplasm. Functionally, single strand-specific metallo-endoribonuclease involved in late-stage 70S ribosome quality control and in maturation of the 3' terminus of the 16S rRNA. The protein is Endoribonuclease YbeY of Francisella tularensis subsp. tularensis (strain SCHU S4 / Schu 4).